The chain runs to 211 residues: Ribosome maturation factor RimM (211 aa).

Residues 111 to 182 (PDAWYDHQLV…TLVITPPLGL (72 aa)) form the PRC barrel domain. The disordered stretch occupies residues 184 to 211 (EEIPDEQPTPSATSDAEPGSAPEGDDAR).

The protein belongs to the RimM family. In terms of assembly, binds ribosomal protein uS19.

It localises to the cytoplasm. Functionally, an accessory protein needed during the final step in the assembly of 30S ribosomal subunit, possibly for assembly of the head region. Essential for efficient processing of 16S rRNA. May be needed both before and after RbfA during the maturation of 16S rRNA. It has affinity for free ribosomal 30S subunits but not for 70S ribosomes. The chain is Ribosome maturation factor RimM from Clavibacter sepedonicus (Clavibacter michiganensis subsp. sepedonicus).